Here is a 604-residue protein sequence, read N- to C-terminus: Dopamine receptor 3 (604 aa).

The Extracellular segment spans residues 1 to 23; it reads MLTGQHHIPGIESPLMVVLWRVA. The helical transmembrane segment at 24-44 threads the bilayer; the sequence is AGVFLPLVPTMAVFGNVLVIL. Topologically, residues 45–58 are cytoplasmic; the sequence is SVYRERNLQTVTNM. Residues 59–79 form a helical membrane-spanning segment; sequence LIVSLAVSDLFVAIGVMSFGV. The Extracellular segment spans residues 80 to 96; that stretch reads YYEWNGFKWGLGSFFCH. An intrachain disulfide couples Cys95 to Cys170. Residues 97–117 traverse the membrane as a helical segment; sequence VYQALDVACSTASILNLLAIS. The Cytoplasmic portion of the chain corresponds to 118-141; it reads LDRYIAIGHPISYAQYGARGGRAM. The helical transmembrane segment at 142–162 threads the bilayer; that stretch reads ISITIVWGVSCAVALPLLLGV. Residues 163 to 179 are Extracellular-facing; sequence NPMENDQCELANPWFNM. Residues 180–200 form a helical membrane-spanning segment; sequence ISSIFSFFIPCIAMIILYTII. At 201–520 the chain is on the cytoplasmic side; it reads FRRLRQRERA…TKQMRREHKA (320 aa). Residues 399–430 form a disordered region; the sequence is SIQDEKKMNSRPPENPFAHQNGTNKQRLLPNP. Residues 521-541 traverse the membrane as a helical segment; that stretch reads TVTLAVVLAVFLFCWLPFFIL. Topologically, residues 542–559 are extracellular; that stretch reads HLSNSICLVIDSNSDCIG. Residues 560-580 form a helical membrane-spanning segment; that stretch reads FLPLYLATWLGYLNSSLNPLI. The Cytoplasmic portion of the chain corresponds to 581–604; that stretch reads YTVFDQRFRNAFRNILSCGFFKKR.

It belongs to the G-protein coupled receptor 1 family.

It localises to the cell membrane. Its function is as follows. Receptor for dopamine. The activity of this receptor is mediated by G proteins which activate adenylyl cyclase. In terms of antagonist responses, would be classed with the D2-like dopamine receptor group. Mediates the effect of dopamine on the inhibition of locomotion. Acts as an antagonist of dop-1. This chain is Dopamine receptor 3, found in Caenorhabditis briggsae.